The sequence spans 462 residues: A-type ATP synthase subunit B (462 aa).

This sequence belongs to the ATPase alpha/beta chains family. In terms of assembly, has multiple subunits with at least A(3), B(3), C, D, E, F, H, I and proteolipid K(x).

Its subcellular location is the cell membrane. Its function is as follows. Component of the A-type ATP synthase that produces ATP from ADP in the presence of a proton gradient across the membrane. The B chain is a regulatory subunit. The sequence is that of A-type ATP synthase subunit B from Methanococcus maripaludis (strain DSM 14266 / JCM 13030 / NBRC 101832 / S2 / LL).